Here is a 428-residue protein sequence, read N- to C-terminus: Dual-specificity RNA methyltransferase RlmN (428 aa).

Over residues 1-17 (MPLHRVEALGEPQDRTG) the composition is skewed to basic and acidic residues. The tract at residues 1 to 44 (MPLHRVEALGEPQDRTGKTFSGRTNGPISSPLTDTERRMSIPQN) is disordered. The segment covering 18–33 (KTFSGRTNGPISSPLT) has biased composition (polar residues). The Proton acceptor role is filled by Glu136. A Radical SAM core domain is found at 142-381 (EDDRGALCVS…APIRMPRGRD (240 aa)). A disulfide bridge links Cys149 with Cys386. Cys156, Cys160, and Cys163 together coordinate [4Fe-4S] cluster. S-adenosyl-L-methionine-binding positions include 212 to 213 (GE), Ser244, 266 to 268 (SLH), and Asn343. Cys386 acts as the S-methylcysteine intermediate in catalysis.

Belongs to the radical SAM superfamily. RlmN family. [4Fe-4S] cluster serves as cofactor.

The protein localises to the cytoplasm. The catalysed reaction is adenosine(2503) in 23S rRNA + 2 reduced [2Fe-2S]-[ferredoxin] + 2 S-adenosyl-L-methionine = 2-methyladenosine(2503) in 23S rRNA + 5'-deoxyadenosine + L-methionine + 2 oxidized [2Fe-2S]-[ferredoxin] + S-adenosyl-L-homocysteine. It carries out the reaction adenosine(37) in tRNA + 2 reduced [2Fe-2S]-[ferredoxin] + 2 S-adenosyl-L-methionine = 2-methyladenosine(37) in tRNA + 5'-deoxyadenosine + L-methionine + 2 oxidized [2Fe-2S]-[ferredoxin] + S-adenosyl-L-homocysteine. Functionally, specifically methylates position 2 of adenine 2503 in 23S rRNA and position 2 of adenine 37 in tRNAs. m2A2503 modification seems to play a crucial role in the proofreading step occurring at the peptidyl transferase center and thus would serve to optimize ribosomal fidelity. This Rhodospirillum rubrum (strain ATCC 11170 / ATH 1.1.1 / DSM 467 / LMG 4362 / NCIMB 8255 / S1) protein is Dual-specificity RNA methyltransferase RlmN.